A 381-amino-acid chain; its full sequence is Glycerophosphocholine acyltransferase 1 (381 aa).

Topologically, residues 1–63 (MANNEDSNSN…IAKQAEEHER (63 aa)) are cytoplasmic. The helical transmembrane segment at 64–84 (FINKVTHLVGVLGFGGFCFLL) threads the bilayer. At 85 to 89 (GARPQ) the chain is on the lumenal side. The helical transmembrane segment at 90–110 (DIPLVYCFFYVIFVPLRWIYY) threads the bilayer. Residues 111–116 (RFKKWH) are Cytoplasmic-facing. A helical transmembrane segment spans residues 117–137 (YYLLDFCYYANTIFLVDLLLY). Topologically, residues 138–141 (PKNE) are lumenal. Residues 142-162 (KLFMVCFSFAEGPLAWAIIVW) traverse the membrane as a helical segment. Residues 163–173 (RCSLVFSSPDK) lie on the Cytoplasmic side of the membrane. Residues 174 to 194 (IVSVLIHLLPGLVFFTIRWWN) traverse the membrane as a helical segment. Over 195 to 223 (PATFAAMHPVGTDRRVSWPYVEDKAYLFT) the chain is Lumenal. Residues 224-244 (WLFLVPLVVYTLWQVLYFLIV) form a helical membrane-spanning segment. The Cytoplasmic portion of the chain corresponds to 245–291 (NVLRRQRLLRDPEVMTSYRELSKKAEKANNKLWQLSGLLGDQNRIWM). A helical transmembrane segment spans residues 292–312 (YILFQAIFTVATMALTVPIFL). Residues 313-315 (SYR) are Lumenal-facing. Residues 316–336 (LHVIFQILKISAAVWNGGSFL) traverse the membrane as a helical segment. The Cytoplasmic portion of the chain corresponds to 337–381 (LEVMPRQVIQKEKKKKAEMQPIEEQILHHEAVSHPTENEPKSTET).

The protein belongs to the GPC1 family.

It localises to the membrane. The catalysed reaction is sn-glycerol 3-phosphocholine + an acyl-CoA = a 1-acyl-sn-glycero-3-phosphocholine + CoA. The enzyme catalyses sn-glycero-3-phosphoethanolamine + an acyl-CoA = a monoacyl-sn-glycero-3-phosphoethanolamine + CoA. It carries out the reaction sn-glycerol 3-phosphocholine + (9Z)-octadecenoyl-CoA = (9Z-octadecenoyl)-sn-glycero-3-phosphocholine + CoA. Glycerophosphocholine acyltransferase (GPCAT) that utilizes acyl-CoA to acylate glycero-3-phosphocholine (GPC), forming lysophosphatidylcholine (LPC). Shows broad acyl specificities with a preference for 16:0-CoA, polyunsaturated acyl-CoA, and the hydroxylated ricinoleoyl-CoA. Also catalyzes the acylation of glycero-3-phosphoethanolamine (GPE) with acyl-CoA. In addition to acyl-CoA, GPCAT efficiently utilizes LPC and lysophosphatidylethanolamine (LPE) as acyl donors in the acylation of GPC. Contributes to the maintenance of phosphatidylcholine (PC) homeostasis and might also have specific functions in acyl editing of PC, such as transferring acyl groups modified at the sn-2 position of PC to the sn-1. The sequence is that of Glycerophosphocholine acyltransferase 1 from Arabidopsis thaliana (Mouse-ear cress).